The chain runs to 70 residues: ATP synthase subunit c (70 aa).

A run of 2 helical transmembrane segments spans residues 4 to 24 (IAAA…NGLI) and 45 to 65 (LMFI…VIAF).

This sequence belongs to the ATPase C chain family. In terms of assembly, F-type ATPases have 2 components, F(1) - the catalytic core - and F(0) - the membrane proton channel. F(1) has five subunits: alpha(3), beta(3), gamma(1), delta(1), epsilon(1). F(0) has three main subunits: a(1), b(2) and c(10-14). The alpha and beta chains form an alternating ring which encloses part of the gamma chain. F(1) is attached to F(0) by a central stalk formed by the gamma and epsilon chains, while a peripheral stalk is formed by the delta and b chains.

The protein resides in the cell membrane. Its function is as follows. F(1)F(0) ATP synthase produces ATP from ADP in the presence of a proton or sodium gradient. F-type ATPases consist of two structural domains, F(1) containing the extramembraneous catalytic core and F(0) containing the membrane proton channel, linked together by a central stalk and a peripheral stalk. During catalysis, ATP synthesis in the catalytic domain of F(1) is coupled via a rotary mechanism of the central stalk subunits to proton translocation. This is ATP synthase subunit c from Bacillus pumilus (strain SAFR-032).